The sequence spans 654 residues: Interferon-induced GTP-binding protein Mx1 (654 aa).

M1 is subject to N-acetylmethionine. Composition is skewed to basic and acidic residues over residues 1-12 (MVLSDLDIKEPD) and 23-32 (DMVREHETES). Residues 1-33 (MVLSDLDIKEPDSPESGLNGSDDMVREHETESK) are disordered. The 274-residue stretch at 62–335 (DLALPAIAVI…LIMHICKTLP (274 aa)) folds into the Dynamin-type G domain. The tract at residues 72 to 79 (GDQSSGKS) is G1 motif. 72 to 79 (GDQSSGKS) contacts GTP. Residues 97–99 (VTR) are G2 motif. The tract at residues 173-176 (DLPG) is G3 motif. GTP contacts are provided by residues 173-177 (DLPGI) and 242-245 (TKPD). Residues 242-245 (TKPD) form a G4 motif region. Residues 274-277 (KCRG) form a G5 motif region. The tract at residues 336-361 (LLENQIKETHQRITEELQKYGKDIPE) is bundle signaling element (BSE). Positions 361–528 (EEESEKMFSL…HFQMEQLVYC (168 aa)) are middle domain. The segment at 362-624 (EESEKMFSLI…KDQYDWLLKE (263 aa)) is stalk. The tract at residues 544 to 563 (EAEEEKKKKSNHYYQSEDSE) is disordered. A critical for lipid-binding region spans residues 549 to 552 (KKKK). The GED domain occupies 566–654 (TAEIFQHLMA…ARQRLAKFPG (89 aa)).

Belongs to the TRAFAC class dynamin-like GTPase superfamily. Dynamin/Fzo/YdjA family. In terms of assembly, homooligomer. Oligomerizes into multimeric filamentous or ring-like structures by virtue of its stalk domain. Oligomerization is critical for GTPase activity, protein stability, and recognition of viral target structures. Interacts with TRPC1, TRPC3, TRPC4, TRPC5, TRPC6 and TRPC7. Interacts with HSPA5. Interacts with DDX39A and DDX39B. Interacts with TUBB/TUBB5. Post-translationally, ISGylated.

It is found in the cytoplasm. The protein resides in the endoplasmic reticulum membrane. Its subcellular location is the perinuclear region. Its function is as follows. Interferon-induced dynamin-like GTPase with antiviral activity. This chain is Interferon-induced GTP-binding protein Mx1 (MX1), found in Ovis aries (Sheep).